We begin with the raw amino-acid sequence, 261 residues long: uncharacterized protein (261 aa).

Belongs to the FwdC/FmdC family.

This is an uncharacterized protein from Methanocaldococcus jannaschii (strain ATCC 43067 / DSM 2661 / JAL-1 / JCM 10045 / NBRC 100440) (Methanococcus jannaschii).